Consider the following 444-residue polypeptide: Tubulin beta-8 chain (444 aa).

Residues 1-4 (MREI) carry the MREI motif motif. 6 residues coordinate GTP: Gln-11, Glu-69, Ser-138, Gly-142, Thr-143, and Gly-144. Glu-69 provides a ligand contact to Mg(2+). The residue at position 172 (Ser-172) is a Phosphoserine; by CDK1. The GTP site is built by Asn-204 and Asn-226. Glu-436 carries the 5-glutamyl polyglutamate modification.

The protein belongs to the tubulin family. In terms of assembly, dimer of alpha and beta chains. A typical microtubule is a hollow water-filled tube with an outer diameter of 25 nm and an inner diameter of 15 nM. Alpha-beta heterodimers associate head-to-tail to form protofilaments running lengthwise along the microtubule wall with the beta-tubulin subunit facing the microtubule plus end conferring a structural polarity. Microtubules usually have 13 protofilaments but different protofilament numbers can be found in some organisms and specialized cells. The cofactor is Mg(2+). In terms of processing, some glutamate residues at the C-terminus are polyglycylated, resulting in polyglycine chains on the gamma-carboxyl group. Glycylation is mainly limited to tubulin incorporated into axonemes (cilia and flagella) whereas glutamylation is prevalent in neuronal cells, centrioles, axonemes, and the mitotic spindle. Both modifications can coexist on the same protein on adjacent residues, and lowering polyglycylation levels increases polyglutamylation, and reciprocally. Cilia and flagella glycylation is required for their stability and maintenance. Flagella glycylation controls sperm motility. Post-translationally, some glutamate residues at the C-terminus are polyglutamylated, resulting in polyglutamate chains on the gamma-carboxyl group. Polyglutamylation plays a key role in microtubule severing by spastin (SPAST). SPAST preferentially recognizes and acts on microtubules decorated with short polyglutamate tails: severing activity by SPAST increases as the number of glutamates per tubulin rises from one to eight, but decreases beyond this glutamylation threshold. Glutamylation is also involved in cilia motility. Phosphorylated on Ser-172 by CDK1 during the cell cycle, from metaphase to telophase, but not in interphase. This phosphorylation inhibits tubulin incorporation into microtubules.

It localises to the cytoplasm. It is found in the cytoskeleton. Its subcellular location is the spindle. Tubulin is the major constituent of microtubules, a cylinder consisting of laterally associated linear protofilaments composed of alpha- and beta-tubulin heterodimers. Microtubules grow by the addition of GTP-tubulin dimers to the microtubule end, where a stabilizing cap forms. Below the cap, tubulin dimers are in GDP-bound state, owing to GTPase activity of alpha-tubulin. Has a key role in meiotic spindle assembly and oocyte maturation. This Papio hamadryas (Hamadryas baboon) protein is Tubulin beta-8 chain (TUBB8).